The chain runs to 115 residues: Ribonuclease P protein component (115 aa).

This sequence belongs to the RnpA family. Consists of a catalytic RNA component (M1 or rnpB) and a protein subunit.

The enzyme catalyses Endonucleolytic cleavage of RNA, removing 5'-extranucleotides from tRNA precursor.. In terms of biological role, RNaseP catalyzes the removal of the 5'-leader sequence from pre-tRNA to produce the mature 5'-terminus. It can also cleave other RNA substrates such as 4.5S RNA. The protein component plays an auxiliary but essential role in vivo by binding to the 5'-leader sequence and broadening the substrate specificity of the ribozyme. In Macrococcus caseolyticus (strain JCSC5402) (Macrococcoides caseolyticum), this protein is Ribonuclease P protein component.